The chain runs to 262 residues: Phosphatidylglycerol--prolipoprotein diacylglyceryl transferase (262 aa).

A run of 3 helical transmembrane segments spans residues 17-37 (LKVH…WILA), 57-77 (LVFY…ALFY), and 92-112 (IWEG…AMYA). Arginine 140 is a binding site for a 1,2-diacyl-sn-glycero-3-phospho-(1'-sn-glycerol). The next 2 membrane-spanning stretches (helical) occupy residues 200 to 220 (MAVS…VEFV) and 234 to 254 (WLTM…VLLA).

Belongs to the Lgt family.

It is found in the cell inner membrane. It carries out the reaction L-cysteinyl-[prolipoprotein] + a 1,2-diacyl-sn-glycero-3-phospho-(1'-sn-glycerol) = an S-1,2-diacyl-sn-glyceryl-L-cysteinyl-[prolipoprotein] + sn-glycerol 1-phosphate + H(+). Its pathway is protein modification; lipoprotein biosynthesis (diacylglyceryl transfer). Catalyzes the transfer of the diacylglyceryl group from phosphatidylglycerol to the sulfhydryl group of the N-terminal cysteine of a prolipoprotein, the first step in the formation of mature lipoproteins. The chain is Phosphatidylglycerol--prolipoprotein diacylglyceryl transferase from Methylococcus capsulatus (strain ATCC 33009 / NCIMB 11132 / Bath).